Here is a 163-residue protein sequence, read N- to C-terminus: Phosphopantetheine adenylyltransferase (163 aa).

Serine 11 is a binding site for substrate. Residues serine 11–phenylalanine 12 and histidine 19 contribute to the ATP site. Residues lysine 43, leucine 75, and arginine 89 each contribute to the substrate site. ATP contacts are provided by residues glycine 90–arginine 92, glutamate 100, and phenylalanine 125–serine 131.

This sequence belongs to the bacterial CoaD family. Homohexamer. It depends on Mg(2+) as a cofactor.

The protein localises to the cytoplasm. The catalysed reaction is (R)-4'-phosphopantetheine + ATP + H(+) = 3'-dephospho-CoA + diphosphate. It functions in the pathway cofactor biosynthesis; coenzyme A biosynthesis; CoA from (R)-pantothenate: step 4/5. Reversibly transfers an adenylyl group from ATP to 4'-phosphopantetheine, yielding dephospho-CoA (dPCoA) and pyrophosphate. This Geobacter metallireducens (strain ATCC 53774 / DSM 7210 / GS-15) protein is Phosphopantetheine adenylyltransferase.